Here is a 351-residue protein sequence, read N- to C-terminus: Protein-glutamate methylesterase/protein-glutamine glutaminase (351 aa).

In terms of domain architecture, Response regulatory spans 6 to 123; that stretch reads RVLVVDDSPT…ARPFGDLADK (118 aa). 4-aspartylphosphate is present on aspartate 57. One can recognise a CheB-type methylesterase domain in the interval 154-346; that stretch reads YRAGRKVVAI…EEILKLTTAR (193 aa). Catalysis depends on residues serine 166, histidine 192, and aspartate 288.

It belongs to the CheB family. Post-translationally, phosphorylated by CheA. Phosphorylation of the N-terminal regulatory domain activates the methylesterase activity.

It localises to the cytoplasm. It catalyses the reaction [protein]-L-glutamate 5-O-methyl ester + H2O = L-glutamyl-[protein] + methanol + H(+). The catalysed reaction is L-glutaminyl-[protein] + H2O = L-glutamyl-[protein] + NH4(+). Functionally, involved in chemotaxis. Part of a chemotaxis signal transduction system that modulates chemotaxis in response to various stimuli. Catalyzes the demethylation of specific methylglutamate residues introduced into the chemoreceptors (methyl-accepting chemotaxis proteins or MCP) by CheR. Also mediates the irreversible deamidation of specific glutamine residues to glutamic acid. The polypeptide is Protein-glutamate methylesterase/protein-glutamine glutaminase (Agrobacterium fabrum (strain C58 / ATCC 33970) (Agrobacterium tumefaciens (strain C58))).